We begin with the raw amino-acid sequence, 681 residues long: Translation factor GUF1 homolog, chloroplastic (681 aa).

A chloroplast-targeting transit peptide spans 1-51 (MAMASAMDLSSPPTFFLSGTSTSSPSLRRLSSISVSGFRRHSNRKLQILCQ). The tr-type G domain occupies 84-265 (SNIRNFSIIA…AIVQRIPAPL (182 aa)). Residues 93 to 100 (AHIDHGKS), 158 to 162 (DTPGH), and 212 to 215 (NKID) contribute to the GTP site.

This sequence belongs to the TRAFAC class translation factor GTPase superfamily. Classic translation factor GTPase family. LepA subfamily.

The protein resides in the plastid. It is found in the chloroplast. It catalyses the reaction GTP + H2O = GDP + phosphate + H(+). Functionally, promotes chloroplast protein synthesis. May act as a fidelity factor of the translation reaction, by catalyzing a one-codon backward translocation of tRNAs on improperly translocated ribosomes. This Arabidopsis thaliana (Mouse-ear cress) protein is Translation factor GUF1 homolog, chloroplastic.